Consider the following 116-residue polypeptide: MMRVVLPLCLLLASIFAWGSEAAISCNAVQANLYPCVVYVVQGGAIPYSCCNGIRMLSKQATSASDKQGVCRCIKSVVGRVSYSSIYLKKAAALPGKCGVKLPYKIDPSTNCNSIK.

An N-terminal signal peptide occupies residues Met-1 to Ala-22. 4 disulfide bridges follow: Cys-26-Cys-73, Cys-36-Cys-50, Cys-51-Cys-98, and Cys-71-Cys-112.

It belongs to the plant LTP family.

Its function is as follows. Plant non-specific lipid-transfer proteins transfer phospholipids as well as galactolipids across membranes. May play a role in wax or cutin deposition in the cell walls of expanding epidermal cells and certain secretory tissues. The polypeptide is Non-specific lipid-transfer protein 10 (LTP10) (Arabidopsis thaliana (Mouse-ear cress)).